Here is a 313-residue protein sequence, read N- to C-terminus: 4-hydroxy-3-methylbut-2-enyl diphosphate reductase (313 aa).

Position 12 (C12) interacts with [4Fe-4S] cluster. (2E)-4-hydroxy-3-methylbut-2-enyl diphosphate contacts are provided by H41 and H74. H41 and H74 together coordinate dimethylallyl diphosphate. 2 residues coordinate isopentenyl diphosphate: H41 and H74. A [4Fe-4S] cluster-binding site is contributed by C96. Residue H124 participates in (2E)-4-hydroxy-3-methylbut-2-enyl diphosphate binding. Residue H124 coordinates dimethylallyl diphosphate. Isopentenyl diphosphate is bound at residue H124. The Proton donor role is filled by E126. A (2E)-4-hydroxy-3-methylbut-2-enyl diphosphate-binding site is contributed by T164. C194 contributes to the [4Fe-4S] cluster binding site. Positions 222, 223, 224, and 266 each coordinate (2E)-4-hydroxy-3-methylbut-2-enyl diphosphate. The dimethylallyl diphosphate site is built by S222, S223, N224, and S266. Residues S222, S223, N224, and S266 each coordinate isopentenyl diphosphate.

Belongs to the IspH family. [4Fe-4S] cluster serves as cofactor.

The catalysed reaction is isopentenyl diphosphate + 2 oxidized [2Fe-2S]-[ferredoxin] + H2O = (2E)-4-hydroxy-3-methylbut-2-enyl diphosphate + 2 reduced [2Fe-2S]-[ferredoxin] + 2 H(+). It catalyses the reaction dimethylallyl diphosphate + 2 oxidized [2Fe-2S]-[ferredoxin] + H2O = (2E)-4-hydroxy-3-methylbut-2-enyl diphosphate + 2 reduced [2Fe-2S]-[ferredoxin] + 2 H(+). Its pathway is isoprenoid biosynthesis; dimethylallyl diphosphate biosynthesis; dimethylallyl diphosphate from (2E)-4-hydroxy-3-methylbutenyl diphosphate: step 1/1. The protein operates within isoprenoid biosynthesis; isopentenyl diphosphate biosynthesis via DXP pathway; isopentenyl diphosphate from 1-deoxy-D-xylulose 5-phosphate: step 6/6. Catalyzes the conversion of 1-hydroxy-2-methyl-2-(E)-butenyl 4-diphosphate (HMBPP) into a mixture of isopentenyl diphosphate (IPP) and dimethylallyl diphosphate (DMAPP). Acts in the terminal step of the DOXP/MEP pathway for isoprenoid precursor biosynthesis. This chain is 4-hydroxy-3-methylbut-2-enyl diphosphate reductase, found in Burkholderia pseudomallei (strain 1026b).